A 312-amino-acid chain; its full sequence is Dehydrin CAS31 (312 aa).

2 disordered regions span residues 1–88 and 248–287; these read MSQY…HTGG and GTEQNTYGTGTGTGHGTTGYGSTGTGHGTTGYGDEQHHGE. Polar residues predominate over residues 21–30; it reads PLTSQGQVDQ. A compositionally biased stretch (gly residues) spans 35–46; the sequence is ISGGGMTGATGH. Low complexity predominate over residues 55-66; sequence HGVGVDQTTGFG. Gly residues-rich tracts occupy residues 67–88 and 256–278; these read SNTGTGTGYGTHTGSGGTHTGG and TGTGTGHGTTGYGSTGTGHGTTG.

The protein belongs to the plant dehydrin family. Interacts with the leghemoglobin LB120-1 in the cytoplasm; this interaction leads to LB120-1 protection from denaturation under thermal and drought stresses. As to expression, expressed in nodules and roots.

It localises to the cytoplasm. Functionally, intrinsically disordered protein acting as a chaperone. Ensures leghemoglobins (e.g. LB120-1) protection from denaturation under thermal and drought stresses to delay root nodule nitrogenase inactivation and subsequent nodule senescence, thus supporting symbiotic nitrogen fixation (SNF). This is Dehydrin CAS31 from Medicago truncatula (Barrel medic).